Consider the following 551-residue polypeptide: Ubiquitin carboxyl-terminal hydrolase 24 (551 aa).

Disordered regions lie at residues asparagine 51–valine 104 and asparagine 163–valine 188. A USP domain is found at arginine 197 to valine 551. Residue cysteine 206 is the Nucleophile of the active site. Polar residues predominate over residues serine 329–asparagine 338. Positions serine 329–proline 349 are disordered. Catalysis depends on histidine 510, which acts as the Proton acceptor.

This sequence belongs to the peptidase C19 family.

It catalyses the reaction Thiol-dependent hydrolysis of ester, thioester, amide, peptide and isopeptide bonds formed by the C-terminal Gly of ubiquitin (a 76-residue protein attached to proteins as an intracellular targeting signal).. Its function is as follows. Recognizes and hydrolyzes the peptide bond at the C-terminal Gly of ubiquitin. Involved in the processing of poly-ubiquitin precursors as well as that of ubiquitinated proteins. The polypeptide is Ubiquitin carboxyl-terminal hydrolase 24 (UBP24) (Arabidopsis thaliana (Mouse-ear cress)).